A 272-amino-acid chain; its full sequence is Orotidine 5'-phosphate decarboxylase (272 aa).

Lys-93 serves as the catalytic Proton donor.

Belongs to the OMP decarboxylase family. Type 2 subfamily.

The catalysed reaction is orotidine 5'-phosphate + H(+) = UMP + CO2. The protein operates within pyrimidine metabolism; UMP biosynthesis via de novo pathway; UMP from orotate: step 2/2. This chain is Orotidine 5'-phosphate decarboxylase, found in Roseiflexus castenholzii (strain DSM 13941 / HLO8).